Reading from the N-terminus, the 94-residue chain is Large ribosomal subunit protein uL23c (94 aa).

This sequence belongs to the universal ribosomal protein uL23 family. Part of the 50S ribosomal subunit.

The protein resides in the plastid. It is found in the chloroplast. Binds to 23S rRNA. This chain is Large ribosomal subunit protein uL23c (rpl23), found in Tupiella akineta (Green alga).